Consider the following 32-residue polypeptide: uncharacterized protein (32 aa).

This is an uncharacterized protein from Mastigocladus laminosus (Fischerella sp.).